A 240-amino-acid polypeptide reads, in one-letter code: Mitochondrial transcription rescue factor 1 (240 aa).

The N-terminal 84 residues, 1–84 (MAMASVKLLA…ECIFPFSVRL (84 aa)), are a transit peptide targeting the mitochondrion. A disordered region spans residues 95–127 (KKSLQKVDEEDSDEESHHDEMSEQEEELEDDPT). A phosphoserine mark is found at serine 106 and serine 116. Over residues 116–126 (SEQEEELEDDP) the composition is skewed to acidic residues. Positions 142-217 (FRYDVVLKTG…LKKVFEEKTE (76 aa)) constitute an S4 RNA-binding domain.

As to quaternary structure, monomer. Interacts with POLRMT. Interacts (via S4 domain) with MTRFR (via C-terminus). Associates with mitoribosomal S39 large subunit, peptidyl tRNA and nascent chain.

It is found in the mitochondrion matrix. Mitochondrial RNA-binding protein involved in mitochondrial transcription regulation. Functions as a protective factor to maintain proper mitochondrial RNA level during stress. Acts at the transcription level and its protective function depends on its RNA binding ability. Part of a mitoribosome-associated quality control pathway that prevents aberrant translation by responding to interruptions during elongation. As heterodimer with MTRF, ejects the unfinished nascent chain and peptidyl transfer RNA (tRNA), respectively, from stalled ribosomes. Recruitment of mitoribosome biogenesis factors to these quality control intermediates suggests additional roles for MTRES1 and MTRF during mitoribosome rescue. The polypeptide is Mitochondrial transcription rescue factor 1 (Homo sapiens (Human)).